We begin with the raw amino-acid sequence, 508 residues long: Photosystem II CP47 reaction center protein (508 aa).

The next 6 helical transmembrane spans lie at 21 to 36 (SVHI…WAGS), 101 to 115 (IVFS…IWHW), 140 to 156 (GIHL…FGAF), 203 to 218 (IAAG…FHLS), 237 to 252 (VLSS…AFVV), and 457 to 472 (SFAL…HGAR).

Belongs to the PsbB/PsbC family. PsbB subfamily. PSII is composed of 1 copy each of membrane proteins PsbA, PsbB, PsbC, PsbD, PsbE, PsbF, PsbH, PsbI, PsbJ, PsbK, PsbL, PsbM, PsbT, PsbX, PsbY, PsbZ, Psb30/Ycf12, at least 3 peripheral proteins of the oxygen-evolving complex and a large number of cofactors. It forms dimeric complexes. It depends on Binds multiple chlorophylls. PSII binds additional chlorophylls, carotenoids and specific lipids. as a cofactor.

The protein localises to the plastid. It localises to the chloroplast thylakoid membrane. In terms of biological role, one of the components of the core complex of photosystem II (PSII). It binds chlorophyll and helps catalyze the primary light-induced photochemical processes of PSII. PSII is a light-driven water:plastoquinone oxidoreductase, using light energy to abstract electrons from H(2)O, generating O(2) and a proton gradient subsequently used for ATP formation. The polypeptide is Photosystem II CP47 reaction center protein (Morus indica (Mulberry)).